The primary structure comprises 337 residues: DNA-directed RNA polymerase subunit alpha (337 aa).

Positions 1-233 are alpha N-terminal domain (alpha-NTD); that stretch reads MIREKVTVST…DLFIPFLHME (233 aa). The interval 266–337 is alpha C-terminal domain (alpha-CTD); that stretch reads KLALKSIFID…FAIDLPKNQF (72 aa).

The protein belongs to the RNA polymerase alpha chain family. In terms of assembly, in plastids the minimal PEP RNA polymerase catalytic core is composed of four subunits: alpha, beta, beta', and beta''. When a (nuclear-encoded) sigma factor is associated with the core the holoenzyme is formed, which can initiate transcription.

It is found in the plastid. It localises to the chloroplast. The enzyme catalyses RNA(n) + a ribonucleoside 5'-triphosphate = RNA(n+1) + diphosphate. Its function is as follows. DNA-dependent RNA polymerase catalyzes the transcription of DNA into RNA using the four ribonucleoside triphosphates as substrates. This is DNA-directed RNA polymerase subunit alpha from Ipomoea purpurea (Common morning glory).